The sequence spans 372 residues: Adaptive-response sensory kinase SasA (372 aa).

The Histidine kinase domain maps to 147-360 (MVAHELRTPL…CFHFTVPVWQ (214 aa)). The residue at position 150 (His-150) is a Phosphohistidine; by autocatalysis.

As to quaternary structure, homooligomerizes. Interacts with KaiC. Participates in the KaiBC complex, whose core is composed of a KaiC homohexamer and 6 KaiB.

The catalysed reaction is ATP + protein L-histidine = ADP + protein N-phospho-L-histidine.. Functionally, member of the two-component regulatory system SasA/RpaA involved in genome-wide circadian gene expression. One of several clock output pathways. Participates in the Kai clock protein complex, the main circadian regulator in cyanobacteria, via its interaction with KaiC. KaiC enhances the autophosphorylation activity of SasA, which then transfers its phosphate group to RpaA to activate it. In addition to its output function, recruits fold-shifted KaiB (KaiB(fs)) to KaiC to cooperatively form the KaiB(6):KaiC(6) complex (independent of SasA kinase activity). Required for robustness of the circadian rhythm of gene expression and is involved in clock output, also required for adaptation to light/dark cycles. The polypeptide is Adaptive-response sensory kinase SasA (Prochlorococcus marinus (strain AS9601)).